A 590-amino-acid polypeptide reads, in one-letter code: UvrABC system protein C (590 aa).

In terms of domain architecture, GIY-YIG spans 11 to 85; it reads ETPGVYLWKR…IKAHRPLYNV (75 aa). The 36-residue stretch at 194–229 folds into the UVR domain; it reads DGLLQELEAKMREAARRLEFERAAEIRDQMEALRAF.

This sequence belongs to the UvrC family. In terms of assembly, interacts with UvrB in an incision complex.

Its subcellular location is the cytoplasm. Functionally, the UvrABC repair system catalyzes the recognition and processing of DNA lesions. UvrC both incises the 5' and 3' sides of the lesion. The N-terminal half is responsible for the 3' incision and the C-terminal half is responsible for the 5' incision. This is UvrABC system protein C from Thermus thermophilus (strain ATCC 27634 / DSM 579 / HB8).